The primary structure comprises 66 residues: Large ribosomal subunit protein bL35 (66 aa).

This sequence belongs to the bacterial ribosomal protein bL35 family.

This chain is Large ribosomal subunit protein bL35, found in Azorhizobium caulinodans (strain ATCC 43989 / DSM 5975 / JCM 20966 / LMG 6465 / NBRC 14845 / NCIMB 13405 / ORS 571).